We begin with the raw amino-acid sequence, 738 residues long: NADH dehydrogenase [ubiquinone] iron-sulfur protein 1, mitochondrial (738 aa).

The N-terminal 27 residues, 1–27 (MGLGLLASRALRSSRIIRNSTRTIVST), are a transit peptide targeting the mitochondrion. Positions 66-144 (DVIEVFVDGY…GMKIKTDTPI (79 aa)) constitute a 2Fe-2S ferredoxin-type domain. Residues Cys-100, Cys-111, Cys-114, and Cys-128 each contribute to the [2Fe-2S] cluster site. The 4Fe-4S His(Cys)3-ligated-type domain maps to 144–183 (IAKKAREGVMEFLLMNHPLDCPICDQGGECDLQDQSMAFG). [4Fe-4S] cluster is bound by residues His-160, Cys-164, Cys-167, Cys-173, Cys-212, Cys-215, Cys-218, and Cys-262. The 57-residue stretch at 281-337 (LKGTESIDVTDAVGSNIRIDSRGPEVMRVVPRLNEDINEEWISDKTRFFYDGLKRQR) folds into the 4Fe-4S Mo/W bis-MGD-type domain.

The protein belongs to the complex I 75 kDa subunit family. As to quaternary structure, complex I is composed of about 45 different subunits. This is a component of the iron-sulfur (IP) fragment of the enzyme. Requires [2Fe-2S] cluster as cofactor. [4Fe-4S] cluster serves as cofactor.

It is found in the mitochondrion inner membrane. The enzyme catalyses a ubiquinone + NADH + 5 H(+)(in) = a ubiquinol + NAD(+) + 4 H(+)(out). In terms of biological role, core subunit of the mitochondrial membrane respiratory chain NADH dehydrogenase (Complex I) that is believed to belong to the minimal assembly required for catalysis. Complex I functions in the transfer of electrons from NADH to the respiratory chain. The immediate electron acceptor for the enzyme is believed to be ubiquinone. This is the largest subunit of complex I and it is a component of the iron-sulfur (IP) fragment of the enzyme. It may form part of the active site crevice where NADH is oxidized. The polypeptide is NADH dehydrogenase [ubiquinone] iron-sulfur protein 1, mitochondrial (Solanum tuberosum (Potato)).